The chain runs to 144 residues: Deoxyuridine 5'-triphosphate nucleotidohydrolase (144 aa).

Substrate-binding positions include Arg63–Gly65, Asn76, and Thr80–Asp82.

This sequence belongs to the dUTPase family. It depends on Mg(2+) as a cofactor.

It carries out the reaction dUTP + H2O = dUMP + diphosphate + H(+). It functions in the pathway pyrimidine metabolism; dUMP biosynthesis; dUMP from dCTP (dUTP route): step 2/2. Functionally, this enzyme is involved in nucleotide metabolism: it produces dUMP, the immediate precursor of thymidine nucleotides and it decreases the intracellular concentration of dUTP so that uracil cannot be incorporated into DNA. This Porphyromonas gingivalis (strain ATCC BAA-308 / W83) protein is Deoxyuridine 5'-triphosphate nucleotidohydrolase.